The following is a 140-amino-acid chain: Transcription antitermination protein NusB (140 aa).

It belongs to the NusB family.

Involved in transcription antitermination. Required for transcription of ribosomal RNA (rRNA) genes. Binds specifically to the boxA antiterminator sequence of the ribosomal RNA (rrn) operons. In Alteromonas mediterranea (strain DSM 17117 / CIP 110805 / LMG 28347 / Deep ecotype), this protein is Transcription antitermination protein NusB.